The chain runs to 319 residues: Probable casein kinase II subunit alpha homolog (319 aa).

Positions 37–316 (YQIYQRMGRG…ADECLRHPLF (280 aa)) constitute a Protein kinase domain. Residues 43-51 (MGRGKYSEV) and lysine 64 contribute to the ATP site. Aspartate 151 serves as the catalytic Proton acceptor.

The protein belongs to the protein kinase superfamily. Ser/Thr protein kinase family. CK2 subfamily. In terms of assembly, tetramer composed of two alpha chains, one beta chain and one beta' chain.

It carries out the reaction L-seryl-[protein] + ATP = O-phospho-L-seryl-[protein] + ADP + H(+). The enzyme catalyses L-threonyl-[protein] + ATP = O-phospho-L-threonyl-[protein] + ADP + H(+). Catalytic subunit of a constitutively active serine/threonine-protein kinase complex that phosphorylates a large number of substrates containing acidic residues C-terminal to the phosphorylated serine or threonine. This Encephalitozoon cuniculi (strain GB-M1) (Microsporidian parasite) protein is Probable casein kinase II subunit alpha homolog (CKA1).